The following is a 670-amino-acid chain: Solute carrier organic anion transporter family member 1A3 (670 aa).

Residues 1-20 lie on the Cytoplasmic side of the membrane; the sequence is MGDLEKGAATHGAGCFAKIK. The helical transmembrane segment at 21–40 threads the bilayer; the sequence is VFLMALTCAYVSKSLSGTFM. Residues 41–59 are Extracellular-facing; it reads SSMLTQIERQFGIPTAIVG. A helical transmembrane segment spans residues 60 to 80; the sequence is FINGSFEIGNLLLIIFVSYFG. Over 81–86 the chain is Cytoplasmic; the sequence is MKLHRP. The helical transmembrane segment at 87–111 threads the bilayer; that stretch reads IVIGVGCAVMGLGCFIISLPHFLMG. The Extracellular portion of the chain corresponds to 112–155; it reads RYEYETTILPTSNLSSNSFLCMENQTQTLNPAQDPAECVKEVKS. Residues N124 and N135 are each glycosylated (N-linked (GlcNAc...) asparagine). Residues 156–184 form a helical membrane-spanning segment; that stretch reads LMWIYVLVGNIIRGIGETPIMPLGVSYIE. Residues 185-203 lie on the Cytoplasmic side of the membrane; that stretch reads NFAKSENSPLYIGILETGK. Residues 204–224 traverse the membrane as a helical segment; the sequence is MIGPIFGLLLGSFCASIYVDT. At 225–242 the chain is on the extracellular side; the sequence is GSVNTDDLTITPTDIRWV. Residues 243 to 267 form a helical membrane-spanning segment; that stretch reads GAWWIGFLVCAGVNILISIPFFFFP. The Cytoplasmic portion of the chain corresponds to 268–311; it reads KTLPKEGLQENVDGTENAKEESTEKRPRKKNRGITKDFFPFLKS. Residues 277 to 296 form a disordered region; the sequence is ENVDGTENAKEESTEKRPRK. Residues 283–292 show a composition bias toward basic and acidic residues; sequence ENAKEESTEK. Residues 312 to 333 traverse the membrane as a helical segment; sequence PVLQPDLHAVHPYKVLQVNAFN. Residues 334-353 lie on the Extracellular side of the membrane; it reads IYFSFLPKYLENQYGKSTAE. A helical transmembrane segment spans residues 354-377; that stretch reads VIFLMGVYNLPAICIGYLIAGFMM. The Cytoplasmic segment spans residues 378–381; it reads KKFK. Residues 382–405 form a helical membrane-spanning segment; the sequence is ITVKTAAFLAFCLSLSEYSFGFCN. At 406-513 the chain is on the extracellular side; the sequence is FLITCDNVPV…PECTNKLQYL (108 aa). One can recognise a Kazal-like domain in the interval 433–488; it reads NNVLADCNTRCSCLTKTWDPVCGDNGLAYMSACLAGCEKSVGTGTNMVFHNCSCIQ. Cystine bridges form between C439-C469, C445-C465, and C454-C486. N-linked (GlcNAc...) asparagine glycosylation is found at N483 and N492. A helical membrane pass occupies residues 514–536; the sequence is LILSGFLSILYSFAAIPGYMVFL. Over 537–545 the chain is Cytoplasmic; the sequence is RCIKSEEKS. Residues 546–571 traverse the membrane as a helical segment; sequence LGIGIHAFCIRVFAGIPAPIYFGALI. Topologically, residues 572-605 are extracellular; it reads DRTCLHWGTQKCGAPGACRMYDINSFRRIYLGMS. A helical transmembrane segment spans residues 606-623; the sequence is AALRGSSYLPAFVIVILT. At 624–670 the chain is on the cytoplasmic side; the sequence is RKFSLPGKINSSEMEIAEMKLTEKESQCTDVHRNPKFKNDGELKTKL.

Belongs to the organo anion transporter (TC 2.A.60) family. All isoforms are detected in kidney, and many are kidney specific. Isoforms 2 and 13 are also detected in liver. Isoforms 4 and 9/K4 are ubiquitous, but isoform 9/K13 is kidney specific. Isoforms 5 and 14 are detected in all tissues tested, with the exception of pancreas and spleen. Isoforms 11 and 15 are detected in kidney, pancreas and testis. Isoform 7 is detected in kidney, liver, testis and spleen.

The protein localises to the cell membrane. In terms of biological role, mediates the Na(+)-independent transport of organic anions such as methotrexate, taurocholate, folate and prostaglandin E2. May contribute to renal secretion and/or reabsorption of hydrophobic anionic compounds. Mediates renal clearance of methotrexate from the blood. This Rattus norvegicus (Rat) protein is Solute carrier organic anion transporter family member 1A3 (Slco1a3).